We begin with the raw amino-acid sequence, 70 residues long: uncharacterized protein (70 aa).

This sequence to M.pneumoniae MPN377.

This is an uncharacterized protein from Ureaplasma parvum serovar 3 (strain ATCC 700970).